The primary structure comprises 375 residues: Tryptophan--tRNA ligase (375 aa).

Positions 81-89 (PSGPVHIGH) match the 'HIGH' region motif. Residues 258 to 262 (KMSAS) carry the 'KMSKS' region motif.

It belongs to the class-I aminoacyl-tRNA synthetase family.

The protein resides in the cytoplasm. It carries out the reaction tRNA(Trp) + L-tryptophan + ATP = L-tryptophyl-tRNA(Trp) + AMP + diphosphate + H(+). The sequence is that of Tryptophan--tRNA ligase from Pyrobaculum aerophilum (strain ATCC 51768 / DSM 7523 / JCM 9630 / CIP 104966 / NBRC 100827 / IM2).